The sequence spans 166 residues: NAD(P)H-quinone oxidoreductase subunit I, chloroplastic (166 aa).

2 consecutive 4Fe-4S ferredoxin-type domains span residues 55–84 and 95–124; these read GRIH…VDWK and LNYS…MTEE. 8 residues coordinate [4Fe-4S] cluster: C64, C67, C70, C74, C104, C107, C110, and C114.

Belongs to the complex I 23 kDa subunit family. In terms of assembly, NDH is composed of at least 16 different subunits, 5 of which are encoded in the nucleus. It depends on [4Fe-4S] cluster as a cofactor.

The protein resides in the plastid. It is found in the chloroplast thylakoid membrane. The catalysed reaction is a plastoquinone + NADH + (n+1) H(+)(in) = a plastoquinol + NAD(+) + n H(+)(out). The enzyme catalyses a plastoquinone + NADPH + (n+1) H(+)(in) = a plastoquinol + NADP(+) + n H(+)(out). In terms of biological role, NDH shuttles electrons from NAD(P)H:plastoquinone, via FMN and iron-sulfur (Fe-S) centers, to quinones in the photosynthetic chain and possibly in a chloroplast respiratory chain. The immediate electron acceptor for the enzyme in this species is believed to be plastoquinone. Couples the redox reaction to proton translocation, and thus conserves the redox energy in a proton gradient. This is NAD(P)H-quinone oxidoreductase subunit I, chloroplastic from Lasianthaea macrocephala (Lipochaeta macrocephala).